Consider the following 191-residue polypeptide: MAALHTLWMGLVLLGVLGVLQTRAQAQVSRQPNFQQDKFLGRWFTSGLASNSSWFREKKNALSMCISVVAPSAEGGLNLTTTFLRKDQCETRTLLLRPAETPGCYSYTSPHWGSTHDVWVVATDYEEYALLYTAGTKSPGQDFHMATLYSRTQTPRAEVKEKFSTFAKTRGFTEDAIVFLPKTERCMEEHR.

The first 24 residues, 1–24 (MAALHTLWMGLVLLGVLGVLQTRA), serve as a signal peptide directing secretion. Position 25 is a pyrrolidone carboxylic acid (Q25). An N-linked (GlcNAc...) asparagine glycan is attached at N51. Residue C65 is the Nucleophile of the active site. The N-linked (GlcNAc...) asparagine glycan is linked to N78. C89 and C186 are disulfide-bonded.

This sequence belongs to the calycin superfamily. Lipocalin family. As to quaternary structure, monomer. In terms of processing, N- and O-glycosylated. Both N-glycosylation recognition sites are almost quantitatively occupied by N-glycans of the biantennary complex type, with a considerable proportion of structures bearing a bisecting GlcNAc. N-glycan at Asn-78: dHex1Hex5HexNAc4. Agalacto structure as well as sialylated and nonsialylated oligosaccharides bearing alpha2-3- and/or alpha2-6-linked NeuNAc are present.

The protein localises to the rough endoplasmic reticulum. Its subcellular location is the nucleus membrane. It localises to the golgi apparatus. The protein resides in the cytoplasm. It is found in the perinuclear region. The protein localises to the secreted. It carries out the reaction prostaglandin H2 = prostaglandin D2. Functionally, catalyzes the conversion of PGH2 to PGD2, a prostaglandin involved in smooth muscle contraction/relaxation and a potent inhibitor of platelet aggregation. Involved in a variety of CNS functions, such as sedation, NREM sleep and PGE2-induced allodynia, and may have an anti-apoptotic role in oligodendrocytes. Binds small non-substrate lipophilic molecules, including biliverdin, bilirubin, retinal, retinoic acid and thyroid hormone, and may act as a scavenger for harmful hydrophobic molecules and as a secretory retinoid and thyroid hormone transporter. Possibly involved in development and maintenance of the blood-brain, blood-retina, blood-aqueous humor and blood-testis barrier. It is likely to play important roles in both maturation and maintenance of the central nervous system and male reproductive system. Involved in PLA2G3-dependent maturation of mast cells. PLA2G3 is secreted by immature mast cells and acts on nearby fibroblasts upstream to PTDGS to synthesize PGD2, which in turn promotes mast cell maturation and degranulation via PTGDR. The sequence is that of Prostaglandin-H2 D-isomerase (PTGDS) from Felis catus (Cat).